Consider the following 257-residue polypeptide: Hydroxyacylglutathione hydrolase (257 aa).

Zn(2+) contacts are provided by His54, His56, Asp58, His59, His113, Asp137, and His175.

This sequence belongs to the metallo-beta-lactamase superfamily. Glyoxalase II family. Monomer. Zn(2+) serves as cofactor.

The enzyme catalyses an S-(2-hydroxyacyl)glutathione + H2O = a 2-hydroxy carboxylate + glutathione + H(+). Its pathway is secondary metabolite metabolism; methylglyoxal degradation; (R)-lactate from methylglyoxal: step 2/2. Thiolesterase that catalyzes the hydrolysis of S-D-lactoyl-glutathione to form glutathione and D-lactic acid. This Nostoc punctiforme (strain ATCC 29133 / PCC 73102) protein is Hydroxyacylglutathione hydrolase.